A 580-amino-acid chain; its full sequence is MSENRKPLLGFVSKLTSGTALGNSGKTHCPLCLGLFKAPRLLPCLHTVCTTCLEQLEPFSVVDIRGGDSDTSSEGSIFQELKPRSLQSQIGILCPVCDAQVDLPMGGVKALTIDHLAVNDVMLESLRGEGQGLVCDLCNDREVEKRCQTCKANLCHFCCQAHRRQKKTTYHTMVDLKDLKGYSRIGKPILCPVHPAEELRLFCEFCDRPVCQDCVVGEHREHPCDFTSNVIHKHGDSVWELLKGTQPHVEALEEALAQIHIINSALQKRVEAVAADVRTFSEGYIKAIEEHRDKLLKQLEDIRAQKENSLQLQKAQLEQLLADMRTGVEFTEHLLTSGSDLEILITKRVVVERLRKLNKVQYSTRPGVNDKIRFCPQEKAGQCRGYEIYGTINTKEVDPAKCVLQGEDLHRAREKQTASFTLLCKDAAGEIMGRGGDNVQVAVVPKDKKDSPVRTMVQDNKDGTYYISYTPKEPGVYTVWVCIKEQHVQGSPFTVMVRRKHRPHSGVFHCCTFCSSGGQKTARCACGGTMPGGYLGCGHGHKGHPGHPHWSCCGKFNEKSECTWTGGQSAPRSLLRTVAL.

The RING-type zinc finger occupies Cys-29–Asp-98. B box-type zinc fingers lie at residues Gly-130–Leu-176 and Gly-186–Thr-227. The Zn(2+) site is built by Cys-135, Cys-138, Cys-158, His-162, Cys-191, His-194, Cys-214, and His-219. Positions Ser-281–Leu-335 form a coiled coil. One copy of the Filamin repeat lies at Thr-394–Val-497.

This sequence belongs to the TRIM/RBCC family. In terms of tissue distribution, expressed in skeletal muscle, brain, heart and pancreas.

Its subcellular location is the cytoplasm. The protein resides in the nucleus. The enzyme catalyses S-ubiquitinyl-[E2 ubiquitin-conjugating enzyme]-L-cysteine + [acceptor protein]-L-lysine = [E2 ubiquitin-conjugating enzyme]-L-cysteine + N(6)-ubiquitinyl-[acceptor protein]-L-lysine.. Functionally, E3 ubiquitin-protein ligase that plays a role in the regulation of inflammatory response. Mechanistically, mediates the 'Lys-48'-linked polyubiquitination of TAB2, a regulatory protein of the kinase TAK1, leading to its degradation via the proteasomal pathway and inhibition of the TLR-mediated inflammatory immune response. May act as a transcriptional repressor in mitogen-activated protein kinase signaling pathway. This is E3 ubiquitin-protein ligase TRIM45 (TRIM45) from Homo sapiens (Human).